The sequence spans 344 residues: Protein BREVIS RADIX (344 aa).

The BRX 1 domain occupies 139 to 194; the sequence is KEWMAQVEPGVHITFASLPTGGNDLKRIRFSREMFDKWQAQRWWGENYDKIVELYN. Residues 203-286 form a disordered region; sequence LQTPARSDDQ…DPPSMSNASE (84 aa). Over residues 223-233 the composition is skewed to basic and acidic residues; the sequence is DSARESKDWTP. A compositionally biased stretch (low complexity) spans 248–264; the sequence is YGGSSNYGPGSYHGGPP. A BRX 2 domain is found at 289–344; the sequence is AEWIEEDEPGVYITIRQLSDGTRELRRVRFSRERFGEVHAKTWWEQNRERIQTQYL.

This sequence belongs to the BRX family. Homodimer and heterodimer with BRXL1. Interacts with NGA1 and ARF5. As to expression, expressed in the developing protophloem up to the elongation zone in root meristem of young seedlings, in the columella and the phloem vasculature throughout the root and in the phloem vasculature in the shoot. Detected in the shoot meristem and in primordia. Low expression in stomata. Confined to sieve element precursor cells and to protophloem.

It localises to the nucleus. It is found in the cell membrane. In terms of biological role, acts as a regulator of cell proliferation and elongation in the root and shoot. Regulates roots architecture and primary root protophloem differentiation. BRX, BAM3, and CLE45 act together to regulate the transition of protophloem cells from proliferation to differentiation, thus impinging on postembryonic growth capacity of the root meristem. Probable transcription regulator. Regulated by the auxin response factor ARF5. Polarly localized in vascular cells and subject to endocytic recycling. Required for CPD expression and for correct nuclear auxin response. Mediates cross-talk between the auxin and brassinosteroid pathways. BRX is a target for auxin-induced, proteasome-mediated degradation. In Arabidopsis thaliana (Mouse-ear cress), this protein is Protein BREVIS RADIX.